We begin with the raw amino-acid sequence, 577 residues long: MNQPQPYMDQHAPAPPPASNMTQYSNYGAPQPLQPATHGYGAPTYPQYGQYGQSMPPMQAGHPVSAPMQGQMVNSLPLPTMSAPQQSGGTQQFQQSFDTTGQIAPHGMKPRVTATLWEDEGSLCFQVEANGVCVARREDNHMINGTKLLNVAGMTRGRRDGILKSEKTRHVVKIGPMHLKGVWIPFDRALDFANKEKITELLYPLFVHNIGALLYHPTNQARQSIGNATMAARRPESSQEYMRTPQGTQAPALTHHHSMSNPINASMPPQPHSIAPHPASGRPQLDRAHTFPTPPASASSMPMTNGNMPNSYEYGSAGAVNSASTPPSNSQGMPQYQTSQPPYTQSYSTPGSYSQPQYTHQQPGVQRFGNIHSSPDGVKTEMGPPARAGAENDHPDHKVGGYGGQQDAEGEHEGEYTHTSASYGARRLSYNYKPNPAPGPLHQDSSHVSPEMTHSPHQNGSGRATPRTTNPYTGYNNTPQRQNQLPSSNLNYVMSSDARAGAPNGQEYAQQAYQPAPQYPAMNGIKRGREDDDQVDPYGRPSSALGEHKRQRTDPGAMSARPISQPHSIKAGGAVRR.

The segment at 1–41 (MNQPQPYMDQHAPAPPPASNMTQYSNYGAPQPLQPATHGYG) is disordered. Over residues 19-28 (SNMTQYSNYG) the composition is skewed to polar residues. An HTH APSES-type domain is found at 111–217 (RVTATLWEDE…HNIGALLYHP (107 aa)). The H-T-H motif DNA-binding region spans 145 to 166 (GTKLLNVAGMTRGRRDGILKSE). Disordered regions lie at residues 228-487 (ATMA…QLPS) and 518-577 (QYPA…AVRR). Composition is skewed to polar residues over residues 238–251 (SQEY…TQAP) and 319–333 (AVNS…SQGM). Positions 334 to 350 (PQYQTSQPPYTQSYSTP) are enriched in low complexity. A compositionally biased stretch (polar residues) spans 351 to 364 (GSYSQPQYTHQQPG). The span at 390 to 399 (AENDHPDHKV) shows a compositional bias: basic and acidic residues. Over residues 465-479 (TPRTTNPYTGYNNTP) the composition is skewed to low complexity. The tract at residues 526 to 552 (KRGREDDDQVDPYGRPSSALGEHKRQR) is nuclear localization domain.

The protein belongs to the EFG1/PHD1/stuA family.

It is found in the nucleus. Functionally, transcription factor that regulates asexual reproduction. Binds the StuA-response elements (StRE) with the consensus sequence 5'-(A/T)CGCG(T/A)N(A/C)-3' at the promoters of target genes. This Dothistroma septosporum (strain NZE10 / CBS 128990) (Red band needle blight fungus) protein is Cell pattern formation-associated protein stuA.